The chain runs to 410 residues: E3 ubiquitin-protein ligase MARCHF4 (410 aa).

An N-terminal signal peptide occupies residues 1-18 (MLMPLCGLLWWWWCCCSG). The tract at residues 92–136 (GPREVVGREPPPVPPPPPLPPSSVEDDWGGPATEPPASLLSSASS) is disordered. Positions 100-112 (EPPPVPPPPPLPP) are enriched in pro residues. Residues 126 to 136 (PPASLLSSASS) are compositionally biased toward low complexity. Residues 155–215 (DSGMRTPLCR…ELCYYKYHVI (61 aa)) form an RING-CH-type zinc finger. Residues C163, C166, C179, C181, H189, C192, C205, and C208 each coordinate Zn(2+). 2 consecutive transmembrane segments (helical) span residues 238-258 (VAAA…LIWS) and 272-292 (LFQI…GLII). Disordered regions lie at residues 324–372 (EDQK…SGPL) and 390–410 (PHEQ…VTTV). The segment covering 333–346 (NPRTSSSTQANIPS) has biased composition (polar residues). The span at 352–366 (AGTPAPEQGPAQAAG) shows a compositional bias: low complexity.

In terms of tissue distribution, expressed in brain and placenta.

The protein resides in the golgi apparatus membrane. It carries out the reaction S-ubiquitinyl-[E2 ubiquitin-conjugating enzyme]-L-cysteine + [acceptor protein]-L-lysine = [E2 ubiquitin-conjugating enzyme]-L-cysteine + N(6)-ubiquitinyl-[acceptor protein]-L-lysine.. Its pathway is protein modification; protein ubiquitination. E3 ubiquitin-protein ligase that may mediate ubiquitination of MHC-I and CD4, and promote their subsequent endocytosis and sorting to lysosomes via multivesicular bodies. E3 ubiquitin ligases accept ubiquitin from an E2 ubiquitin-conjugating enzyme in the form of a thioester and then directly transfer the ubiquitin to targeted substrates. The polypeptide is E3 ubiquitin-protein ligase MARCHF4 (Homo sapiens (Human)).